The primary structure comprises 293 residues: Putative serine protease 42 (293 aa).

The first 26 residues, 1-26 (MSSGGGSRGLLAWLLLLQPWPGQNWA), serve as a signal peptide directing secretion. Residues 33–60 (LPSPLLSEEGGENPEASPAPGPEAGPPL) are disordered. In terms of domain architecture, Peptidase S1 spans 80–293 (IVGGVDAEEG…IVSWGIGCGR (214 aa)). Residues C105 and C121 are joined by a disulfide bond. Catalysis depends on H120, which acts as the Charge relay system. N141 carries N-linked (GlcNAc...) asparagine glycosylation. Residue D166 is the Charge relay system of the active site. N177 carries an N-linked (GlcNAc...) asparagine glycan. 3 disulfides stabilise this stretch: C200–C273, C232–C253, and C263–C291. Catalysis depends on S267, which acts as the Charge relay system. A glycan (N-linked (GlcNAc...) asparagine) is linked at N276.

It belongs to the peptidase S1 family.

It is found in the cytoplasm. The protein localises to the cell membrane. In terms of biological role, plays a role in spermatogenesis. Involved in germ cell survival during meiosis. The chain is Putative serine protease 42 from Homo sapiens (Human).